The chain runs to 90 residues: uncharacterized protein (90 aa).

The stretch at 36–82 (DQEYSDAQMQLEDAVNALNKLWLSSNDQQREQLYRMRLQLQSLQNNM) forms a coiled coil.

This is an uncharacterized protein from Bacillus subtilis (strain 168).